Reading from the N-terminus, the 219-residue chain is Thiopurine S-methyltransferase (219 aa).

S-adenosyl-L-methionine is bound by residues W10, L45, E66, and R123.

This sequence belongs to the class I-like SAM-binding methyltransferase superfamily. TPMT family.

It is found in the cytoplasm. The catalysed reaction is S-adenosyl-L-methionine + a thiopurine = S-adenosyl-L-homocysteine + a thiopurine S-methylether.. This Bordetella petrii (strain ATCC BAA-461 / DSM 12804 / CCUG 43448) protein is Thiopurine S-methyltransferase.